A 341-amino-acid chain; its full sequence is MIELKEVVKEYRTKNKEVLAVDHVNLSIRAGSIYGVIGFSGAGKSTLIRMFNHLEAPTSGEVIIDGDHIGQLSKNGLRAKRQKVSMIFQHFNLLWSRTVLKNIMFPLEIAGVPRRRAKQKALELVELVGLKGREKAYPSELSGGQKQRVGIARALANDPTVLLCDEATSALDPQTTDEILDLLLKIREQQNLTIVLITHEMHVIRRICDEVAVMESGKVIEQGPVTQVFENPQHTVTKRFVKDDLNDDFETSLTELEPLEKDAYIVRLVFAGSTTTEPIVSSLSTAYDIKINILEANIKNTKNGTVGFLVLHIPYISSVDFGKFEKELIERQVKMEVLRHG.

The 240-residue stretch at 2 to 241 (IELKEVVKEY…PQHTVTKRFV (240 aa)) folds into the ABC transporter domain. ATP is bound at residue 38 to 45 (GFSGAGKS).

The protein belongs to the ABC transporter superfamily. Methionine importer (TC 3.A.1.24) family. The complex is composed of two ATP-binding proteins (MetN), two transmembrane proteins (MetI) and a solute-binding protein (MetQ).

Its subcellular location is the cell membrane. It carries out the reaction L-methionine(out) + ATP + H2O = L-methionine(in) + ADP + phosphate + H(+). It catalyses the reaction D-methionine(out) + ATP + H2O = D-methionine(in) + ADP + phosphate + H(+). Part of the ABC transporter complex MetNIQ involved in methionine import. Responsible for energy coupling to the transport system. This Staphylococcus aureus (strain USA300) protein is Methionine import ATP-binding protein MetN 2.